We begin with the raw amino-acid sequence, 61 residues long: Probable tautomerase SERP0934 (61 aa).

Proline 2 acts as the Proton acceptor; via imino nitrogen in catalysis.

This sequence belongs to the 4-oxalocrotonate tautomerase family.

The protein is Probable tautomerase SERP0934 of Staphylococcus epidermidis (strain ATCC 35984 / DSM 28319 / BCRC 17069 / CCUG 31568 / BM 3577 / RP62A).